A 396-amino-acid polypeptide reads, in one-letter code: Lipopolysaccharide assembly protein B (396 aa).

The chain crosses the membrane as a helical span at residues 1 to 20 (MIELLFLLLPIAAAYGWYMG). The Cytoplasmic portion of the chain corresponds to 21 to 396 (RRSAKKDQDD…IKPVSNQEHN (376 aa)). 4 TPR repeats span residues 35–68 (LSRD…QEIE), 77–109 (FEAE…SPNY), 149–182 (ENAL…KPQE), and 221–254 (VRAS…NPDY). Positions 364, 367, 378, and 381 each coordinate Fe cation.

Belongs to the LapB family.

The protein localises to the cell inner membrane. Functionally, modulates cellular lipopolysaccharide (LPS) levels by regulating LpxC, which is involved in lipid A biosynthesis. May act by modulating the proteolytic activity of FtsH towards LpxC. May also coordinate assembly of proteins involved in LPS synthesis at the plasma membrane. This Haemophilus influenzae (strain ATCC 51907 / DSM 11121 / KW20 / Rd) protein is Lipopolysaccharide assembly protein B.